Consider the following 481-residue polypeptide: MHDIKAIRDNPTAFDDAYTRRGLAPIAQSLIDKDDARRKAILASEQAQARRNAASKEIGDAKKAKDNVRAEALMAEVAELKTTMPALDAAVKDADAALKKALSEIPNLPLADVPEGKDEHDNEVRSHYGVKRSYAFTPKPHYELGEALKQMDFEAAAKLSGARFVVLKKGLARLERAIGQFFLDVHTEEHGYTEVNPPLLVRDEAMFGTAQLPKFEDDQFFVGNGNNVRRLQQEMRATIEADDVKNIPDMFVPKSKYDRLLENYLRLETEQIALELTRRWLIPTAEVPLTNLVRESILDEKELPLRMTALTQCFRAEAGAAGRDTRGMIRQHQFTKVELVSVTTPEQSKDEHERMLSCAEEVLRRLELHYRVMTLCTGDMGFASQKTYDIEVWMPGQGEGGAYREISSCSVCGDFQARRMDARSRGPDGKPRFVHTLNGSGTAVGRALIAVIENYQQEDGSIAVPTVLQRYMGGLKVISNG.

Thr-284–Glu-286 contacts L-serine. Residue Arg-315–Glu-317 participates in ATP binding. L-serine is bound at residue Glu-338. Glu-405–Ser-408 contributes to the ATP binding site. Ser-440 provides a ligand contact to L-serine.

The protein belongs to the class-II aminoacyl-tRNA synthetase family. Type-1 seryl-tRNA synthetase subfamily. Homodimer. The tRNA molecule binds across the dimer.

It is found in the cytoplasm. The enzyme catalyses tRNA(Ser) + L-serine + ATP = L-seryl-tRNA(Ser) + AMP + diphosphate + H(+). It carries out the reaction tRNA(Sec) + L-serine + ATP = L-seryl-tRNA(Sec) + AMP + diphosphate + H(+). It participates in aminoacyl-tRNA biosynthesis; selenocysteinyl-tRNA(Sec) biosynthesis; L-seryl-tRNA(Sec) from L-serine and tRNA(Sec): step 1/1. Its function is as follows. Catalyzes the attachment of serine to tRNA(Ser). Is also able to aminoacylate tRNA(Sec) with serine, to form the misacylated tRNA L-seryl-tRNA(Sec), which will be further converted into selenocysteinyl-tRNA(Sec). The polypeptide is Serine--tRNA ligase (Rhodopseudomonas palustris (strain BisB18)).